A 692-amino-acid polypeptide reads, in one-letter code: Glycine--tRNA ligase beta subunit (692 aa).

Belongs to the class-II aminoacyl-tRNA synthetase family. In terms of assembly, tetramer of two alpha and two beta subunits.

The protein localises to the cytoplasm. The catalysed reaction is tRNA(Gly) + glycine + ATP = glycyl-tRNA(Gly) + AMP + diphosphate. This is Glycine--tRNA ligase beta subunit from Hahella chejuensis (strain KCTC 2396).